A 482-amino-acid polypeptide reads, in one-letter code: Bifunctional protein GlmU (482 aa).

Positions 1–241 (MTASTEAAVV…SALVTGVNDR (241 aa)) are pyrophosphorylase. UDP-N-acetyl-alpha-D-glucosamine-binding positions include 12-15 (LAAG), K26, Q83, 88-89 (GT), 112-114 (SGD), G151, E166, N181, and N239. Residue D114 participates in Mg(2+) binding. N239 contacts Mg(2+). Positions 242–262 (VQLSDLGKVLNRRIVAAHQRA) are linker. Residues 263–482 (GVTIIDPGST…AARKALGDES (220 aa)) are N-acetyltransferase. R344 and K362 together coordinate UDP-N-acetyl-alpha-D-glucosamine. Catalysis depends on H374, which acts as the Proton acceptor. Y377 and N388 together coordinate UDP-N-acetyl-alpha-D-glucosamine. Residues A391, 397–398 (NY), S416, and A434 contribute to the acetyl-CoA site. Residues 463–482 (KKRPGSAADKAARKALGDES) form a disordered region. The segment covering 472–482 (KAARKALGDES) has biased composition (basic and acidic residues).

It in the N-terminal section; belongs to the N-acetylglucosamine-1-phosphate uridyltransferase family. The protein in the C-terminal section; belongs to the transferase hexapeptide repeat family. As to quaternary structure, homotrimer. Requires Mg(2+) as cofactor.

Its subcellular location is the cytoplasm. The enzyme catalyses alpha-D-glucosamine 1-phosphate + acetyl-CoA = N-acetyl-alpha-D-glucosamine 1-phosphate + CoA + H(+). It catalyses the reaction N-acetyl-alpha-D-glucosamine 1-phosphate + UTP + H(+) = UDP-N-acetyl-alpha-D-glucosamine + diphosphate. It functions in the pathway nucleotide-sugar biosynthesis; UDP-N-acetyl-alpha-D-glucosamine biosynthesis; N-acetyl-alpha-D-glucosamine 1-phosphate from alpha-D-glucosamine 6-phosphate (route II): step 2/2. It participates in nucleotide-sugar biosynthesis; UDP-N-acetyl-alpha-D-glucosamine biosynthesis; UDP-N-acetyl-alpha-D-glucosamine from N-acetyl-alpha-D-glucosamine 1-phosphate: step 1/1. The protein operates within bacterial outer membrane biogenesis; LPS lipid A biosynthesis. In terms of biological role, catalyzes the last two sequential reactions in the de novo biosynthetic pathway for UDP-N-acetylglucosamine (UDP-GlcNAc). The C-terminal domain catalyzes the transfer of acetyl group from acetyl coenzyme A to glucosamine-1-phosphate (GlcN-1-P) to produce N-acetylglucosamine-1-phosphate (GlcNAc-1-P), which is converted into UDP-GlcNAc by the transfer of uridine 5-monophosphate (from uridine 5-triphosphate), a reaction catalyzed by the N-terminal domain. This Mycolicibacterium smegmatis (strain ATCC 700084 / mc(2)155) (Mycobacterium smegmatis) protein is Bifunctional protein GlmU.